Here is a 413-residue protein sequence, read N- to C-terminus: Multifunctional CCA protein (413 aa).

ATP is bound by residues Gly-8 and Arg-11. 2 residues coordinate CTP: Gly-8 and Arg-11. The Mg(2+) site is built by Asp-21 and Asp-23. ATP-binding residues include Arg-91, Arg-143, and Arg-146. CTP contacts are provided by Arg-91, Arg-143, and Arg-146. The 102-residue stretch at 232 to 333 (TGVHVMMVID…VRLLERADAL (102 aa)) folds into the HD domain.

Belongs to the tRNA nucleotidyltransferase/poly(A) polymerase family. Bacterial CCA-adding enzyme type 1 subfamily. As to quaternary structure, monomer. Can also form homodimers and oligomers. Mg(2+) is required as a cofactor. The cofactor is Ni(2+).

The catalysed reaction is a tRNA precursor + 2 CTP + ATP = a tRNA with a 3' CCA end + 3 diphosphate. The enzyme catalyses a tRNA with a 3' CCA end + 2 CTP + ATP = a tRNA with a 3' CCACCA end + 3 diphosphate. Catalyzes the addition and repair of the essential 3'-terminal CCA sequence in tRNAs without using a nucleic acid template. Adds these three nucleotides in the order of C, C, and A to the tRNA nucleotide-73, using CTP and ATP as substrates and producing inorganic pyrophosphate. tRNA 3'-terminal CCA addition is required both for tRNA processing and repair. Also involved in tRNA surveillance by mediating tandem CCA addition to generate a CCACCA at the 3' terminus of unstable tRNAs. While stable tRNAs receive only 3'-terminal CCA, unstable tRNAs are marked with CCACCA and rapidly degraded. The protein is Multifunctional CCA protein of Burkholderia mallei (strain NCTC 10247).